The primary structure comprises 391 residues: Multidrug resistance protein MdtL (391 aa).

A run of 12 helical transmembrane segments spans residues Phe4–Val24, Ile42–Ala62, Pro69–Glu89, Leu93–Phe113, Leu131–Met151, Ser158–Leu178, Phe203–Val222, Ala245–Phe265, Thr269–Pro289, Val293–Met313, Leu331–Ile351, and Met356–Ala376.

This sequence belongs to the major facilitator superfamily. DHA1 family. MdtL (TC 2.A.1.2.22) subfamily.

The protein localises to the cell inner membrane. Its function is as follows. Confers resistance to chloramphenicol. The chain is Multidrug resistance protein MdtL from Escherichia coli (strain 55989 / EAEC).